The primary structure comprises 160 residues: SsrA-binding protein (160 aa).

It belongs to the SmpB family.

It localises to the cytoplasm. In terms of biological role, required for rescue of stalled ribosomes mediated by trans-translation. Binds to transfer-messenger RNA (tmRNA), required for stable association of tmRNA with ribosomes. tmRNA and SmpB together mimic tRNA shape, replacing the anticodon stem-loop with SmpB. tmRNA is encoded by the ssrA gene; the 2 termini fold to resemble tRNA(Ala) and it encodes a 'tag peptide', a short internal open reading frame. During trans-translation Ala-aminoacylated tmRNA acts like a tRNA, entering the A-site of stalled ribosomes, displacing the stalled mRNA. The ribosome then switches to translate the ORF on the tmRNA; the nascent peptide is terminated with the 'tag peptide' encoded by the tmRNA and targeted for degradation. The ribosome is freed to recommence translation, which seems to be the essential function of trans-translation. This is SsrA-binding protein from Haemophilus ducreyi (strain 35000HP / ATCC 700724).